A 554-amino-acid polypeptide reads, in one-letter code: (E)-nerolidol synthase TPS18VF (554 aa).

(2E,6E)-farnesyl diphosphate is bound by residues R276, D313, D317, R455, and D458. Positions 313 and 317 each coordinate Mg(2+). The DDXXD motif motif lies at 313 to 317; sequence DDIFD. The Mg(2+) site is built by D458, S462, and E466.

The protein belongs to the terpene synthase family. Tpsb subfamily. The cofactor is Mg(2+). Requires Mn(2+) as cofactor. Highly expressed in glandular trichomes.

It catalyses the reaction (2E,6E)-farnesyl diphosphate + H2O = (6E)-nerolidol + diphosphate. It carries out the reaction (2E)-geranyl diphosphate + H2O = (R)-linalool + diphosphate. The enzyme catalyses (2E)-geranyl diphosphate + H2O = (S)-linalool + diphosphate. It functions in the pathway secondary metabolite biosynthesis; terpenoid biosynthesis. In terms of biological role, involved in sesquiterpene olefins biosynthesis, constituants of cannabinoids and terpenoids-rich resins. Catalyzes primarily the conversion of (2E)-farnesyl diphosphate to (E)-nerolidol, and the conversion of (2E)-geranyl diphosphate to (+)linalool and (-)linalool. This is (E)-nerolidol synthase TPS18VF from Cannabis sativa (Hemp).